The sequence spans 586 residues: Dolichyl-diphosphooligosaccharide--protein glycosyltransferase subunit 1 (586 aa).

The first 15 residues, 1–15 (MRLLFAIALLGAVFA), serve as a signal peptide directing secretion. Topologically, residues 16–421 (EDAWKAANVD…EFEFVDMLRE (406 aa)) are lumenal. A helical transmembrane segment spans residues 422-442 (PLLASAFFFSLFFVIIVYSRF). Residues 443–586 (DFTISSDPAK…NRADSVLASI (144 aa)) are Cytoplasmic-facing.

It belongs to the OST1 family. As to quaternary structure, component of the oligosaccharyltransferase (OST) complex.

The protein localises to the endoplasmic reticulum membrane. It is found in the cytoplasmic granule. The protein operates within protein modification; protein glycosylation. Functionally, subunit of the oligosaccharyl transferase (OST) complex that catalyzes the initial transfer of a defined glycan (Glc(3)Man(9)GlcNAc(2) in eukaryotes) from the lipid carrier dolichol-pyrophosphate to an asparagine residue within an Asn-X-Ser/Thr consensus motif in nascent polypeptide chains, the first step in protein N-glycosylation. N-glycosylation occurs cotranslationally and the complex associates with the Sec61 complex at the channel-forming translocon complex that mediates protein translocation across the endoplasmic reticulum (ER). All subunits are required for a maximal enzyme activity. In Caenorhabditis elegans, this protein is Dolichyl-diphosphooligosaccharide--protein glycosyltransferase subunit 1.